The sequence spans 243 residues: Urease accessory protein UreF (243 aa).

The protein belongs to the UreF family. UreD, UreF and UreG form a complex that acts as a GTP-hydrolysis-dependent molecular chaperone, activating the urease apoprotein by helping to assemble the nickel containing metallocenter of UreC. The UreE protein probably delivers the nickel.

It localises to the cytoplasm. Its function is as follows. Required for maturation of urease via the functional incorporation of the urease nickel metallocenter. This Xanthobacter autotrophicus (strain ATCC BAA-1158 / Py2) protein is Urease accessory protein UreF.